Consider the following 298-residue polypeptide: Lipoyl synthase (298 aa).

[4Fe-4S] cluster is bound by residues cysteine 40, cysteine 45, cysteine 51, cysteine 67, cysteine 71, cysteine 74, and serine 280. Positions 53–269 (AVRRTATFMI…KEIALSKGFS (217 aa)) constitute a Radical SAM core domain.

Belongs to the radical SAM superfamily. Lipoyl synthase family. [4Fe-4S] cluster is required as a cofactor.

The protein localises to the cytoplasm. It catalyses the reaction [[Fe-S] cluster scaffold protein carrying a second [4Fe-4S](2+) cluster] + N(6)-octanoyl-L-lysyl-[protein] + 2 oxidized [2Fe-2S]-[ferredoxin] + 2 S-adenosyl-L-methionine + 4 H(+) = [[Fe-S] cluster scaffold protein] + N(6)-[(R)-dihydrolipoyl]-L-lysyl-[protein] + 4 Fe(3+) + 2 hydrogen sulfide + 2 5'-deoxyadenosine + 2 L-methionine + 2 reduced [2Fe-2S]-[ferredoxin]. The protein operates within protein modification; protein lipoylation via endogenous pathway; protein N(6)-(lipoyl)lysine from octanoyl-[acyl-carrier-protein]. Functionally, catalyzes the radical-mediated insertion of two sulfur atoms into the C-6 and C-8 positions of the octanoyl moiety bound to the lipoyl domains of lipoate-dependent enzymes, thereby converting the octanoylated domains into lipoylated derivatives. In Geobacillus thermodenitrificans (strain NG80-2), this protein is Lipoyl synthase.